The sequence spans 126 residues: Large ribosomal subunit protein bL19 (126 aa).

It belongs to the bacterial ribosomal protein bL19 family.

Functionally, this protein is located at the 30S-50S ribosomal subunit interface and may play a role in the structure and function of the aminoacyl-tRNA binding site. The chain is Large ribosomal subunit protein bL19 from Thiobacillus denitrificans (strain ATCC 25259 / T1).